A 344-amino-acid polypeptide reads, in one-letter code: Anthranilate phosphoribosyltransferase (344 aa).

Residues Gly-86, 89 to 90, Thr-94, 96 to 99, 114 to 122, and Ser-126 contribute to the 5-phospho-alpha-D-ribose 1-diphosphate site; these read GD, NIST, and KHGNKSASG. Gly-86 lines the anthranilate pocket. Ser-98 serves as a coordination point for Mg(2+). Asn-117 provides a ligand contact to anthranilate. Position 172 (Arg-172) interacts with anthranilate. Positions 231 and 232 each coordinate Mg(2+).

It belongs to the anthranilate phosphoribosyltransferase family. As to quaternary structure, homodimer. Requires Mg(2+) as cofactor.

The catalysed reaction is N-(5-phospho-beta-D-ribosyl)anthranilate + diphosphate = 5-phospho-alpha-D-ribose 1-diphosphate + anthranilate. It participates in amino-acid biosynthesis; L-tryptophan biosynthesis; L-tryptophan from chorismate: step 2/5. Catalyzes the transfer of the phosphoribosyl group of 5-phosphorylribose-1-pyrophosphate (PRPP) to anthranilate to yield N-(5'-phosphoribosyl)-anthranilate (PRA). This is Anthranilate phosphoribosyltransferase from Prochlorococcus marinus (strain MIT 9215).